We begin with the raw amino-acid sequence, 202 residues long: Potassium-transporting ATPase KdpC subunit 1 (202 aa).

The helical transmembrane segment at 17–37 threads the bilayer; it reads LWVIAAVIYPFFMIAVGQIVF.

It belongs to the KdpC family. In terms of assembly, the system is composed of three essential subunits: KdpA, KdpB and KdpC.

Its subcellular location is the cell inner membrane. Functionally, part of the high-affinity ATP-driven potassium transport (or Kdp) system, which catalyzes the hydrolysis of ATP coupled with the electrogenic transport of potassium into the cytoplasm. This subunit acts as a catalytic chaperone that increases the ATP-binding affinity of the ATP-hydrolyzing subunit KdpB by the formation of a transient KdpB/KdpC/ATP ternary complex. This Nostoc sp. (strain PCC 7120 / SAG 25.82 / UTEX 2576) protein is Potassium-transporting ATPase KdpC subunit 1.